A 366-amino-acid polypeptide reads, in one-letter code: Glutamate 5-kinase (366 aa).

ATP is bound at residue K17. 3 residues coordinate substrate: S57, D144, and N156. Residues 176 to 177 and 216 to 222 each bind ATP; these read SD and TGGMVSK. The PUA domain occupies 278-356; that stretch reads SGALTLDDGA…SDLPAEMRRP (79 aa).

It belongs to the glutamate 5-kinase family.

The protein localises to the cytoplasm. The catalysed reaction is L-glutamate + ATP = L-glutamyl 5-phosphate + ADP. Its pathway is amino-acid biosynthesis; L-proline biosynthesis; L-glutamate 5-semialdehyde from L-glutamate: step 1/2. Functionally, catalyzes the transfer of a phosphate group to glutamate to form L-glutamate 5-phosphate. This chain is Glutamate 5-kinase, found in Mycolicibacterium vanbaalenii (strain DSM 7251 / JCM 13017 / BCRC 16820 / KCTC 9966 / NRRL B-24157 / PYR-1) (Mycobacterium vanbaalenii).